A 161-amino-acid polypeptide reads, in one-letter code: Phosphopantetheine adenylyltransferase (161 aa).

A substrate-binding site is contributed by serine 11. Residues 11 to 12 (SF) and histidine 19 contribute to the ATP site. Substrate-binding residues include lysine 43, leucine 75, and arginine 89. Residues 90-92 (GLR), glutamate 100, and 125-131 (YSFISSS) each bind ATP.

This sequence belongs to the bacterial CoaD family. As to quaternary structure, homohexamer. The cofactor is Mg(2+).

It is found in the cytoplasm. The catalysed reaction is (R)-4'-phosphopantetheine + ATP + H(+) = 3'-dephospho-CoA + diphosphate. It participates in cofactor biosynthesis; coenzyme A biosynthesis; CoA from (R)-pantothenate: step 4/5. Functionally, reversibly transfers an adenylyl group from ATP to 4'-phosphopantetheine, yielding dephospho-CoA (dPCoA) and pyrophosphate. The sequence is that of Phosphopantetheine adenylyltransferase from Staphylococcus saprophyticus subsp. saprophyticus (strain ATCC 15305 / DSM 20229 / NCIMB 8711 / NCTC 7292 / S-41).